Consider the following 507-residue polypeptide: Maturase K (507 aa).

It belongs to the intron maturase 2 family. MatK subfamily.

Its subcellular location is the plastid. It localises to the chloroplast. Usually encoded in the trnK tRNA gene intron. Probably assists in splicing its own and other chloroplast group II introns. The polypeptide is Maturase K (Asimina triloba (Pawpaw)).